The following is a 421-amino-acid chain: C2 calcium-dependent domain-containing protein 4C (421 aa).

Disordered stretches follow at residues 13-97 (RGSG…AKLA), 119-140 (DWLS…SLPS), 158-228 (HTRR…SPFG), and 250-303 (VSQL…TVHV). The segment covering 215–228 (ESDTGSSAESSPFG) has biased composition (polar residues). Phosphoserine occurs at positions 262, 264, and 273. The C2 domain occupies 305 to 421 (PRGSVRLLAE…LPLTSLLPFL (117 aa)).

The protein belongs to the C2CD4 family.

In Homo sapiens (Human), this protein is C2 calcium-dependent domain-containing protein 4C (C2CD4C).